The chain runs to 391 residues: 3-ketoacyl-CoA thiolase (391 aa).

C90 acts as the Acyl-thioester intermediate in catalysis. Active-site proton acceptor residues include H347 and C377.

This sequence belongs to the thiolase-like superfamily. Thiolase family.

It carries out the reaction an acyl-CoA + acetyl-CoA = a 3-oxoacyl-CoA + CoA. The protein operates within lipid metabolism; fatty acid beta-oxidation. Its function is as follows. Involved in the degradation of long-chain fatty acids. In Bacillus subtilis (strain 168), this protein is 3-ketoacyl-CoA thiolase (fadA).